We begin with the raw amino-acid sequence, 757 residues long: Elongation factor G, mitochondrial (757 aa).

The N-terminal 39 residues, 1 to 39, are a transit peptide targeting the mitochondrion; it reads MLLVPRVPVVMQGKCGLLKISRPLQGSLSRGFHFSRAHR. Residues 65-346 form the tr-type G domain; the sequence is QKLRNIGISA…AIVDYLPNPS (282 aa). GTP contacts are provided by residues 74-81, 145-149, and 199-202; these read AHIDSGKT, DTPGH, and NKMD.

Belongs to the TRAFAC class translation factor GTPase superfamily. Classic translation factor GTPase family. EF-G/EF-2 subfamily.

It is found in the mitochondrion. The protein operates within protein biosynthesis; polypeptide chain elongation. Its function is as follows. Mitochondrial GTPase that catalyzes the GTP-dependent ribosomal translocation step during translation elongation. During this step, the ribosome changes from the pre-translocational (PRE) to the post-translocational (POST) state as the newly formed A-site-bound peptidyl-tRNA and P-site-bound deacylated tRNA move to the P and E sites, respectively. Catalyzes the coordinated movement of the two tRNA molecules, the mRNA and conformational changes in the ribosome. The sequence is that of Elongation factor G, mitochondrial from Candida glabrata (strain ATCC 2001 / BCRC 20586 / JCM 3761 / NBRC 0622 / NRRL Y-65 / CBS 138) (Yeast).